The sequence spans 306 residues: Porphobilinogen deaminase (306 aa).

C244 carries the post-translational modification S-(dipyrrolylmethanemethyl)cysteine.

It belongs to the HMBS family. As to quaternary structure, monomer. Requires dipyrromethane as cofactor.

The enzyme catalyses 4 porphobilinogen + H2O = hydroxymethylbilane + 4 NH4(+). Its pathway is porphyrin-containing compound metabolism; protoporphyrin-IX biosynthesis; coproporphyrinogen-III from 5-aminolevulinate: step 2/4. Functionally, tetrapolymerization of the monopyrrole PBG into the hydroxymethylbilane pre-uroporphyrinogen in several discrete steps. This chain is Porphobilinogen deaminase, found in Streptococcus sanguinis (strain SK36).